Reading from the N-terminus, the 114-residue chain is UPF0342 protein LSL_0473 (114 aa).

This sequence belongs to the UPF0342 family.

The chain is UPF0342 protein LSL_0473 from Ligilactobacillus salivarius (strain UCC118) (Lactobacillus salivarius).